A 741-amino-acid chain; its full sequence is ATP-dependent RNA helicase DRS1 (741 aa).

Basic residues predominate over residues Val35–Lys44. Disordered stretches follow at residues Val35–Asn63 and Gly106–Ala200. Composition is skewed to acidic residues over residues Lys118–Ala147 and Val159–Ala200. Residues Thr222–Ser250 carry the Q motif motif. The region spanning Ile253 to Ile429 is the Helicase ATP-binding domain. ATP is bound at residue Ala266–Thr273. The DEAD box signature appears at Asp376–Asp379. The 146-residue stretch at Leu458 to Ser603 folds into the Helicase C-terminal domain. A coiled-coil region spans residues Asp610–Glu657. Residues Asn650–Lys741 are disordered. Over residues Met652–Asp672 the composition is skewed to basic and acidic residues. Positions Lys686–Lys697 are enriched in basic residues. A compositionally biased stretch (basic and acidic residues) spans Ala698–Arg723.

This sequence belongs to the DEAD box helicase family. DDX27/DRS1 subfamily. Associates with pre-ribosomal particles.

The protein localises to the nucleus. Its subcellular location is the nucleolus. The enzyme catalyses ATP + H2O = ADP + phosphate + H(+). ATP-binding RNA helicase involved in ribosome assembly. The polypeptide is ATP-dependent RNA helicase DRS1 (DRS1) (Scheffersomyces stipitis (strain ATCC 58785 / CBS 6054 / NBRC 10063 / NRRL Y-11545) (Yeast)).